The primary structure comprises 379 residues: Lipoyl synthase, mitochondrial (379 aa).

[4Fe-4S] cluster is bound by residues Cys-106, Cys-111, Cys-117, Cys-137, Cys-141, Cys-144, and Ser-352. One can recognise a Radical SAM core domain in the interval 122–341 (EHGTQTATIM…EERGNALGFL (220 aa)).

Belongs to the radical SAM superfamily. Lipoyl synthase family. It depends on [4Fe-4S] cluster as a cofactor.

The protein resides in the mitochondrion. The catalysed reaction is [[Fe-S] cluster scaffold protein carrying a second [4Fe-4S](2+) cluster] + N(6)-octanoyl-L-lysyl-[protein] + 2 oxidized [2Fe-2S]-[ferredoxin] + 2 S-adenosyl-L-methionine + 4 H(+) = [[Fe-S] cluster scaffold protein] + N(6)-[(R)-dihydrolipoyl]-L-lysyl-[protein] + 4 Fe(3+) + 2 hydrogen sulfide + 2 5'-deoxyadenosine + 2 L-methionine + 2 reduced [2Fe-2S]-[ferredoxin]. It participates in protein modification; protein lipoylation via endogenous pathway; protein N(6)-(lipoyl)lysine from octanoyl-[acyl-carrier-protein]: step 2/2. Catalyzes the radical-mediated insertion of two sulfur atoms into the C-6 and C-8 positions of the octanoyl moiety bound to the lipoyl domains of lipoate-dependent enzymes, thereby converting the octanoylated domains into lipoylated derivatives. This chain is Lipoyl synthase, mitochondrial, found in Drosophila erecta (Fruit fly).